Reading from the N-terminus, the 260-residue chain is Dolichol-phosphate mannosyltransferase subunit 1 (260 aa).

The interval 1–25 (MASTGASRSLAASPRPPQGRSSRQD) is disordered. An N-acetylalanine modification is found at Ala-2. A phosphoserine mark is found at Ser-3 and Ser-9. Residues Pro-32, Tyr-34, Glu-36, Ile-63, Asp-65, Asp-118, Ala-119, Asp-120, Arg-147, Arg-234, and Lys-240 each contribute to the GDP-alpha-D-mannose site. Asp-120 is a Mg(2+) binding site. Residue Asp-120 coordinates Mn(2+).

The protein belongs to the glycosyltransferase 2 family. Component of the dolichol-phosphate mannose (DPM) synthase complex composed of DPM1, DPM2 and DPM3; within the complex, directly interacts with DPM3. This interaction may stabilize DPM1. Mg(2+) is required as a cofactor. It depends on Mn(2+) as a cofactor. Ca(2+) serves as cofactor.

Its subcellular location is the endoplasmic reticulum. The catalysed reaction is a di-trans,poly-cis-dolichyl phosphate + GDP-alpha-D-mannose = a di-trans,poly-cis-dolichyl beta-D-mannosyl phosphate + GDP. It functions in the pathway protein modification; protein glycosylation. Transfers mannose from GDP-mannose to dolichol monophosphate to form dolichol phosphate mannose (Dol-P-Man) which is the mannosyl donor in pathways leading to N-glycosylation, glycosyl phosphatidylinositol membrane anchoring, and O-mannosylation of proteins; catalytic subunit of the dolichol-phosphate mannose (DPM) synthase complex. The chain is Dolichol-phosphate mannosyltransferase subunit 1 (Dpm1) from Mus musculus (Mouse).